Reading from the N-terminus, the 249-residue chain is Type III pantothenate kinase (249 aa).

Residue 8 to 15 coordinates ATP; the sequence is DAGNSRLK. Residues Tyr95 and 102-105 contribute to the substrate site; that span reads GVDR. The Proton acceptor role is filled by Asp104. Asp125 is a binding site for K(+). An ATP-binding site is contributed by Thr128. Substrate is bound at residue Thr179.

It belongs to the type III pantothenate kinase family. In terms of assembly, homodimer. NH4(+) serves as cofactor. The cofactor is K(+).

The protein localises to the cytoplasm. The enzyme catalyses (R)-pantothenate + ATP = (R)-4'-phosphopantothenate + ADP + H(+). It functions in the pathway cofactor biosynthesis; coenzyme A biosynthesis; CoA from (R)-pantothenate: step 1/5. Functionally, catalyzes the phosphorylation of pantothenate (Pan), the first step in CoA biosynthesis. This Alkalilimnicola ehrlichii (strain ATCC BAA-1101 / DSM 17681 / MLHE-1) protein is Type III pantothenate kinase.